Consider the following 420-residue polypeptide: Pyrin and HIN domain-containing protein 1 (420 aa).

Positions 1-87 (MVNEYKRIVL…ANKLKNEKAK (87 aa)) constitute a Pyrin domain. Disordered regions lie at residues 82–201 (KNEK…SSSA) and 216–236 (RLKNVPKEPSEENGHQQGSKK). Residues 87-102 (KAKRTRTGKRKTAAKR) are compositionally biased toward basic residues. 2 stretches are compositionally biased toward polar residues: residues 108-118 (PSTSQPMSTTN) and 126-151 (GRSTPDTQVAQLSLPTASRRNQAIQI). Positions 152–169 (SPTIASSSGQTSSRSSET) are enriched in low complexity. The span at 170–201 (LQSIIQSPKTPKRPSSSILDPPVSSGTASSSA) shows a compositional bias: polar residues. The region spanning 219 to 416 (NVPKEPSEEN…STTHSNMQVI (198 aa)) is the HIN-200 domain. The segment covering 220-229 (VPKEPSEENG) has biased composition (basic and acidic residues).

Belongs to the HIN-200 family.

It is found in the nucleus. This chain is Pyrin and HIN domain-containing protein 1, found in Mus musculus (Mouse).